The chain runs to 90 residues: Probable Fe(2+)-trafficking protein (90 aa).

It belongs to the Fe(2+)-trafficking protein family.

Its function is as follows. Could be a mediator in iron transactions between iron acquisition and iron-requiring processes, such as synthesis and/or repair of Fe-S clusters in biosynthetic enzymes. This is Probable Fe(2+)-trafficking protein from Aeromonas salmonicida (strain A449).